The primary structure comprises 89 residues: Putative regulatory protein CLH_1161 (89 aa).

The protein belongs to the RemA family.

The sequence is that of Putative regulatory protein CLH_1161 from Clostridium botulinum (strain Alaska E43 / Type E3).